Consider the following 178-residue polypeptide: uncharacterized protein (178 aa).

Positions 1-89 (MSAKEGSSHP…GEKKGKTEKL (89 aa)) are disordered. Composition is skewed to basic and acidic residues over residues 44 to 53 (PYQKNEKVVV) and 61 to 89 (AFLH…TEKL).

This is an uncharacterized protein from Schizosaccharomyces pombe (strain 972 / ATCC 24843) (Fission yeast).